Here is a 74-residue protein sequence, read N- to C-terminus: Small ribosomal subunit protein uS15 (74 aa).

The protein belongs to the universal ribosomal protein uS15 family. In terms of assembly, part of the 30S ribosomal subunit. Forms a bridge to the 50S subunit in the 70S ribosome, contacting the 23S rRNA.

In terms of biological role, one of the primary rRNA binding proteins, it binds directly to 16S rRNA where it helps nucleate assembly of the platform of the 30S subunit by binding and bridging several RNA helices of the 16S rRNA. Functionally, forms an intersubunit bridge (bridge B4) with the 23S rRNA of the 50S subunit in the ribosome. The protein is Small ribosomal subunit protein uS15 of Aster yellows witches'-broom phytoplasma (strain AYWB).